Consider the following 391-residue polypeptide: MAGVKERAVLVLEDGTVYHGYAFGARGKTVGEVVFNTAQTGYQEIMTDPSYHGQIVVMTYPHQGNYGVNVYDMQSNRPWVRGFVAKEFSRVASNPRAQQTIGEFMEFYGVVGIEGIDTRALVRKIREGGVLKGTIAHASLFGAPDHAFTQEELEALRREAQAWTDIDGRDMTPEVSTPLPYAWPTLKSGRRIVVMDFGIKHAIVENLAALGFEVIVVPGKTPAHQIMALEPHGLLISNGPGDPTMPRYAHETIWKLMGLLPTFGICLGHQLLALAAGGRTFKMKFGHRGANHPVKNLQTGKIEITSQNHGYAVDIDSLKDFRPTHVNLNDGTLEGMAHARYPVFSVQYHPEAAPGPHDALYLFRRFLEEVEAFHGATGLPVEKQRADQHGI.

Positions 1–187 are CPSase; the sequence is MAGVKERAVL…PLPYAWPTLK (187 aa). Positions 50, 239, and 241 each coordinate L-glutamine. The Glutamine amidotransferase type-1 domain maps to 191 to 376; that stretch reads RIVVMDFGIK…LEEVEAFHGA (186 aa). C266 acts as the Nucleophile in catalysis. L267, Q270, N308, G310, and Y311 together coordinate L-glutamine. Residues H349 and E351 contribute to the active site.

The protein belongs to the CarA family. Composed of two chains; the small (or glutamine) chain promotes the hydrolysis of glutamine to ammonia, which is used by the large (or ammonia) chain to synthesize carbamoyl phosphate. Tetramer of heterodimers (alpha,beta)4.

It catalyses the reaction hydrogencarbonate + L-glutamine + 2 ATP + H2O = carbamoyl phosphate + L-glutamate + 2 ADP + phosphate + 2 H(+). The catalysed reaction is L-glutamine + H2O = L-glutamate + NH4(+). The protein operates within amino-acid biosynthesis; L-arginine biosynthesis; carbamoyl phosphate from bicarbonate: step 1/1. It functions in the pathway pyrimidine metabolism; UMP biosynthesis via de novo pathway; (S)-dihydroorotate from bicarbonate: step 1/3. Functionally, small subunit of the glutamine-dependent carbamoyl phosphate synthetase (CPSase). CPSase catalyzes the formation of carbamoyl phosphate from the ammonia moiety of glutamine, carbonate, and phosphate donated by ATP, constituting the first step of 2 biosynthetic pathways, one leading to arginine and/or urea and the other to pyrimidine nucleotides. The small subunit (glutamine amidotransferase) binds and cleaves glutamine to supply the large subunit with the substrate ammonia. This chain is Carbamoyl phosphate synthase small chain, found in Thermus thermophilus (strain ATCC BAA-163 / DSM 7039 / HB27).